The chain runs to 113 residues: UPF0102 protein Ccon26_01140 (113 aa).

It belongs to the UPF0102 family.

The protein is UPF0102 protein Ccon26_01140 of Campylobacter concisus (strain 13826).